The following is a 389-amino-acid chain: Teichoic acid glycerol-phosphate transferase (389 aa).

Belongs to the CDP-glycerol glycerophosphotransferase family.

It localises to the cell membrane. It carries out the reaction 4-O-[(2R)-glycerylphospho]-N-acetyl-beta-D-mannosaminyl-(1-&gt;4)-N-acetyl-alpha-D-glucosaminyl di-trans,octa-cis-undecaprenyl diphosphate + CDP-glycerol = 4-O-[di(2R)-glycerylphospho]-N-acetyl-beta-D-mannosaminyl-(1-&gt;4)-N-acetyl-alpha-D-glucosaminyl di-trans,octa-cis-undecaprenyl diphosphate + CMP + H(+). The protein operates within cell wall biogenesis; poly(ribitol phosphate) teichoic acid biosynthesis. Functionally, catalyzes the addition of a second glycerol phosphate unit from CDP-glycerol to the prenolpyrophosphate-linked disaccharide, to complete the linkage unit. This is Teichoic acid glycerol-phosphate transferase (tarF) from Staphylococcus aureus (strain NCTC 8325 / PS 47).